A 766-amino-acid polypeptide reads, in one-letter code: 5-methyltetrahydropteroyltriglutamate--homocysteine methyltransferase (766 aa).

5-methyltetrahydropteroyltri-L-glutamate-binding positions include 16 to 19 (RELK) and lysine 119. L-homocysteine is bound by residues 440 to 442 (IGS) and glutamate 493. L-methionine-binding positions include 440-442 (IGS) and glutamate 493. 5-methyltetrahydropteroyltri-L-glutamate is bound by residues 524–525 (RC) and tryptophan 570. Aspartate 608 provides a ligand contact to L-homocysteine. Aspartate 608 is a binding site for L-methionine. Glutamate 614 contributes to the 5-methyltetrahydropteroyltri-L-glutamate binding site. The Zn(2+) site is built by histidine 650, cysteine 652, and glutamate 674. Residue histidine 703 is the Proton donor of the active site. Cysteine 735 contacts Zn(2+).

It belongs to the vitamin-B12 independent methionine synthase family. The cofactor is Zn(2+).

It catalyses the reaction 5-methyltetrahydropteroyltri-L-glutamate + L-homocysteine = tetrahydropteroyltri-L-glutamate + L-methionine. Its pathway is amino-acid biosynthesis; L-methionine biosynthesis via de novo pathway; L-methionine from L-homocysteine (MetE route): step 1/1. Catalyzes the transfer of a methyl group from 5-methyltetrahydrofolate to homocysteine resulting in methionine formation. The polypeptide is 5-methyltetrahydropteroyltriglutamate--homocysteine methyltransferase (Pseudomonas aeruginosa (strain ATCC 15692 / DSM 22644 / CIP 104116 / JCM 14847 / LMG 12228 / 1C / PRS 101 / PAO1)).